We begin with the raw amino-acid sequence, 627 residues long: Chaperone protein DnaK (627 aa).

Residue threonine 197 is modified to Phosphothreonine; by autocatalysis. Residues 596–615 show a composition bias toward low complexity; it reads MYAQGGDQGQQAAPQQEQSG. A disordered region spans residues 596-627; that stretch reads MYAQGGDQGQQAAPQQEQSGDNVEDVEFEEVK. Acidic residues predominate over residues 617–627; the sequence is NVEDVEFEEVK.

Belongs to the heat shock protein 70 family.

Acts as a chaperone. The polypeptide is Chaperone protein DnaK (Flavobacterium johnsoniae (strain ATCC 17061 / DSM 2064 / JCM 8514 / BCRC 14874 / CCUG 350202 / NBRC 14942 / NCIMB 11054 / UW101) (Cytophaga johnsonae)).